Here is a 396-residue protein sequence, read N- to C-terminus: Odorant receptor 49a (396 aa).

Over 1–6 (MEKLRS) the chain is Cytoplasmic. Residues 7 to 27 (YEDFIFMANMMFKTLGYDLFH) form a helical membrane-spanning segment. Over 28-34 (TPKPWWR) the chain is Extracellular. A helical membrane pass occupies residues 35–55 (YLLVRGYFVLCTISNFYEASM). Residues 56-70 (VTTRIIEWESLAGSP) are Cytoplasmic-facing. The chain crosses the membrane as a helical span at residues 71–91 (SKIMRQGLHFFYMLSSQLKFI). At 92–141 (TFMINRKRLLQLSHRLKELYPHKEQNQRKYEVNKYYLSCSTRNVLYVYYF) the chain is on the extracellular side. A helical membrane pass occupies residues 142–162 (VMVVMALEPLVQSCIMYLIGF). Residues 163–209 (GKADFTYKRIFPTRLTFDSEKPLGYVLAYVIDFTYSQFIVNVSLGTD) are Cytoplasmic-facing. Residues 210–230 (LWMMCVSSQISMHLGYLANML) form a helical membrane-spanning segment. Topologically, residues 231-266 (ASIRPSPETEQQDCDFLASIIKRHQLMIRLQKDVNY) are extracellular. The chain crosses the membrane as a helical span at residues 267-287 (VFGLLLASNLFTTSCLLCCMA). Residues 288-296 (YYTVVEGFN) are Cytoplasmic-facing. A helical membrane pass occupies residues 297-317 (WEGISYMMLFASVAAQFYVVS). Residues 318 to 396 (SHGQMLIDLS…FAVIRQTVEK (79 aa)) lie on the Extracellular side of the membrane.

This sequence belongs to the insect chemoreceptor superfamily. Heteromeric odorant receptor channel (TC 1.A.69) family. Or49a subfamily. In terms of assembly, interacts with Orco. Complexes exist early in the endomembrane system in olfactory sensory neurons (OSNs), coupling these complexes to the conserved ciliary trafficking pathway.

The protein resides in the cell membrane. Its function is as follows. Odorant receptor which mediates acceptance or avoidance behavior, depending on its substrates. The odorant receptor repertoire encodes a large collection of odor stimuli that vary widely in identity, intensity, and duration. May form a complex with Orco to form odorant-sensing units, providing sensitive and prolonged odorant signaling and calcium permeability. Involved in the behavioral responses to butanol and 2-heptanone. This is Odorant receptor 49a (Or49a) from Drosophila melanogaster (Fruit fly).